The primary structure comprises 459 residues: tRNA modification GTPase MnmE (459 aa).

(6S)-5-formyl-5,6,7,8-tetrahydrofolate contacts are provided by Arg-23, Glu-85, and Arg-124. One can recognise a TrmE-type G domain in the interval Gly-221–Phe-380. A K(+)-binding site is contributed by Asn-231. GTP contacts are provided by residues Asn-231–Ser-236, Thr-250–Thr-256, and Asp-275–Gly-278. Ser-235 is a Mg(2+) binding site. Thr-250, Ile-252, and Thr-255 together coordinate K(+). A Mg(2+)-binding site is contributed by Thr-256. Residue Lys-459 participates in (6S)-5-formyl-5,6,7,8-tetrahydrofolate binding.

Belongs to the TRAFAC class TrmE-Era-EngA-EngB-Septin-like GTPase superfamily. TrmE GTPase family. As to quaternary structure, homodimer. Heterotetramer of two MnmE and two MnmG subunits. K(+) serves as cofactor.

Its subcellular location is the cytoplasm. Its function is as follows. Exhibits a very high intrinsic GTPase hydrolysis rate. Involved in the addition of a carboxymethylaminomethyl (cmnm) group at the wobble position (U34) of certain tRNAs, forming tRNA-cmnm(5)s(2)U34. This Oceanobacillus iheyensis (strain DSM 14371 / CIP 107618 / JCM 11309 / KCTC 3954 / HTE831) protein is tRNA modification GTPase MnmE.